The sequence spans 483 residues: ATP synthase subunit beta, chloroplastic (483 aa).

G163–T170 is an ATP binding site.

The protein belongs to the ATPase alpha/beta chains family. In terms of assembly, F-type ATPases have 2 components, CF(1) - the catalytic core - and CF(0) - the membrane proton channel. CF(1) has five subunits: alpha(3), beta(3), gamma(1), delta(1), epsilon(1). CF(0) has four main subunits: a(1), b(1), b'(1) and c(9-12).

It is found in the plastid. Its subcellular location is the chloroplast thylakoid membrane. It catalyses the reaction ATP + H2O + 4 H(+)(in) = ADP + phosphate + 5 H(+)(out). Produces ATP from ADP in the presence of a proton gradient across the membrane. The catalytic sites are hosted primarily by the beta subunits. The polypeptide is ATP synthase subunit beta, chloroplastic (Ostreococcus tauri).